We begin with the raw amino-acid sequence, 116 residues long: Orphan antitoxin YagB (116 aa).

This sequence belongs to the CbeA/YafW/YfjZ antitoxin family.

Putative antitoxin component of a type IV toxin-antitoxin (TA) system; its cognate toxin is unknown. The protein is Orphan antitoxin YagB (yagB) of Escherichia coli (strain K12).